Here is a 352-residue protein sequence, read N- to C-terminus: Phenylalanine--tRNA ligase alpha subunit (352 aa).

A Mg(2+)-binding site is contributed by E258.

The protein belongs to the class-II aminoacyl-tRNA synthetase family. Phe-tRNA synthetase alpha subunit type 1 subfamily. As to quaternary structure, tetramer of two alpha and two beta subunits. The cofactor is Mg(2+).

It is found in the cytoplasm. It catalyses the reaction tRNA(Phe) + L-phenylalanine + ATP = L-phenylalanyl-tRNA(Phe) + AMP + diphosphate + H(+). This chain is Phenylalanine--tRNA ligase alpha subunit, found in Staphylococcus aureus (strain NCTC 8325 / PS 47).